A 227-amino-acid polypeptide reads, in one-letter code: MERPLESYKKEAAHAAIAYVQDGMVVGLGTGSTARYAVLELARRLREGELKGVVGVPTSRATEELAKREGIPLVDLPPEGVDLAIDGADEIAPGLALIKGMGGALLREKIVERAAKEFIVIADHTKKVPVLGRGPVPVEIVPFGYRATLKAIADLGGEPELRMDGDEFYFTDGGHLIADCRFGPIGDPLGLHRALLEIPGVVETGLFVGMATRALVAGPFGVEELLP.

Residues 30–33, 86–89, and 99–104 each bind substrate; these read TGST, DGAD, and KGMGGA. Catalysis depends on E108, which acts as the Proton acceptor. K126 is a substrate binding site.

Belongs to the ribose 5-phosphate isomerase family. As to quaternary structure, homodimer.

The catalysed reaction is aldehydo-D-ribose 5-phosphate = D-ribulose 5-phosphate. It functions in the pathway carbohydrate degradation; pentose phosphate pathway; D-ribose 5-phosphate from D-ribulose 5-phosphate (non-oxidative stage): step 1/1. Involved in the first step of the non-oxidative branch of the pentose phosphate pathway. It catalyzes the reversible conversion of ribose-5-phosphate to ribulose 5-phosphate. Can also act on D-ribose-5-diphosphate and D-ribose-5-triphosphate as substrate. This chain is Ribose-5-phosphate isomerase A, found in Thermus thermophilus (strain ATCC BAA-163 / DSM 7039 / HB27).